Consider the following 292-residue polypeptide: Secreted frizzled-related protein 2 (292 aa).

An N-terminal signal peptide occupies residues 1 to 20; it reads MPRRLCALLLLASQCLGSTA. The FZ domain occupies 32-152; the sequence is YKRSNCKPIP…PKDNDLCIPL (121 aa). Disulfide bonds link C37-C100, C47-C93, C84-C122, C111-C149, C115-C139, C169-C242, and C187-C292. Positions 169–292 constitute an NTR domain; the sequence is CDACKNKNED…FSRSIRKLQC (124 aa).

It belongs to the secreted frizzled-related protein (sFRP) family.

It is found in the secreted. In terms of biological role, soluble frizzled-related proteins (sFRPS) function as modulators of Wnt signaling through direct interaction with Wnts. They have a role in regulating cell growth and differentiation in specific cell types. SFRP2 appears to be associated with myogenesis. The polypeptide is Secreted frizzled-related protein 2 (SFRP2) (Gallus gallus (Chicken)).